We begin with the raw amino-acid sequence, 130 residues long: uncharacterized protein (130 aa).

The interval 48–130 (RGYWPQGPPP…LIAAMEEDER (83 aa)) is disordered. Gly residues predominate over residues 80–107 (GGDGGGDAGAGPSGVAGTAAGGAGGDGA).

This is an uncharacterized protein from Aotus trivirgatus (Three-striped night monkey).